A 269-amino-acid chain; its full sequence is Formamidopyrimidine-DNA glycosylase (269 aa).

The Schiff-base intermediate with DNA role is filled by proline 2. Glutamate 3 functions as the Proton donor in the catalytic mechanism. Lysine 57 (proton donor; for beta-elimination activity) is an active-site residue. DNA-binding residues include histidine 90, arginine 109, and lysine 150. The FPG-type zinc-finger motif lies at 235–269; that stretch reads QVYGRAGELCRRCGNVIEIAKHGQRSTFFCRHCQH. The active-site Proton donor; for delta-elimination activity is the arginine 259.

This sequence belongs to the FPG family. As to quaternary structure, monomer. It depends on Zn(2+) as a cofactor.

It catalyses the reaction Hydrolysis of DNA containing ring-opened 7-methylguanine residues, releasing 2,6-diamino-4-hydroxy-5-(N-methyl)formamidopyrimidine.. The enzyme catalyses 2'-deoxyribonucleotide-(2'-deoxyribose 5'-phosphate)-2'-deoxyribonucleotide-DNA = a 3'-end 2'-deoxyribonucleotide-(2,3-dehydro-2,3-deoxyribose 5'-phosphate)-DNA + a 5'-end 5'-phospho-2'-deoxyribonucleoside-DNA + H(+). Its function is as follows. Involved in base excision repair of DNA damaged by oxidation or by mutagenic agents. Acts as a DNA glycosylase that recognizes and removes damaged bases. Has a preference for oxidized purines, such as 7,8-dihydro-8-oxoguanine (8-oxoG). Has AP (apurinic/apyrimidinic) lyase activity and introduces nicks in the DNA strand. Cleaves the DNA backbone by beta-delta elimination to generate a single-strand break at the site of the removed base with both 3'- and 5'-phosphates. The protein is Formamidopyrimidine-DNA glycosylase of Yersinia enterocolitica serotype O:8 / biotype 1B (strain NCTC 13174 / 8081).